The sequence spans 42 residues: Large ribosomal subunit protein bL36 (42 aa).

The protein belongs to the bacterial ribosomal protein bL36 family.

The sequence is that of Large ribosomal subunit protein bL36 from Wolbachia sp. subsp. Brugia malayi (strain TRS).